A 118-amino-acid chain; its full sequence is Small ribosomal subunit protein uS13 (118 aa).

Residues 94-118 form a disordered region; that stretch reads SLPLRGQRTKTNARTRKGPRKPIKR.

This sequence belongs to the universal ribosomal protein uS13 family. Part of the 30S ribosomal subunit. Forms a loose heterodimer with protein S19. Forms two bridges to the 50S subunit in the 70S ribosome.

Functionally, located at the top of the head of the 30S subunit, it contacts several helices of the 16S rRNA. In the 70S ribosome it contacts the 23S rRNA (bridge B1a) and protein L5 of the 50S subunit (bridge B1b), connecting the 2 subunits; these bridges are implicated in subunit movement. Contacts the tRNAs in the A and P-sites. This chain is Small ribosomal subunit protein uS13, found in Pseudoalteromonas translucida (strain TAC 125).